We begin with the raw amino-acid sequence, 182 residues long: Adenine phosphoribosyltransferase (182 aa).

The protein belongs to the purine/pyrimidine phosphoribosyltransferase family. In terms of assembly, homodimer.

It localises to the cytoplasm. It catalyses the reaction AMP + diphosphate = 5-phospho-alpha-D-ribose 1-diphosphate + adenine. It functions in the pathway purine metabolism; AMP biosynthesis via salvage pathway; AMP from adenine: step 1/1. Functionally, catalyzes a salvage reaction resulting in the formation of AMP, that is energically less costly than de novo synthesis. The polypeptide is Adenine phosphoribosyltransferase (Bordetella avium (strain 197N)).